Reading from the N-terminus, the 222-residue chain is Sigma non-opioid intracellular receptor 1 (222 aa).

Residues 1 to 7 are Lumenal-facing; sequence MGVAGPW. A helical transmembrane segment spans residues 8–29; sequence VLRVGLGLGAFALLLQGLRGWL. Topologically, residues 30–222 are cytoplasmic; sequence ACKRYEFQPA…ASAFFSTLGC (193 aa). Residues 98–105 are important for ligand-binding; that stretch reads SLTEYVLL. Positions 176–222 are C-terminal hydrophobic region; the sequence is FVPSTLAFALADTLFSTQDFITLFYTLRAYTKGLLLEASAFFSTLGC.

It belongs to the ERG2 family. In terms of assembly, homotrimer.

The protein resides in the nucleus inner membrane. Its subcellular location is the nucleus outer membrane. It is found in the nucleus envelope. It localises to the cytoplasmic vesicle. The protein localises to the endoplasmic reticulum membrane. The protein resides in the membrane. Its function is as follows. May function in lipid transport from the endoplasmic reticulum and be involved in a wide array of cellular functions probably through regulation of the biogenesis of lipid microdomains at the plasma membrane. May regulate calcium efflux at the endoplasmic reticulum. This chain is Sigma non-opioid intracellular receptor 1 (SIGMAR1), found in Gallus gallus (Chicken).